The sequence spans 88 residues: Putative membrane protein insertion efficiency factor (88 aa).

Belongs to the UPF0161 family.

The protein resides in the cell inner membrane. Could be involved in insertion of integral membrane proteins into the membrane. This is Putative membrane protein insertion efficiency factor from Synechococcus sp. (strain CC9311).